We begin with the raw amino-acid sequence, 272 residues long: MISVNKVFYAHSERFQMQNMNVHIKAGEVVSLIGPNGSGKSTLLRLMARLLKQSEGDIVLDGKSIHTMKSADVAKQLAMLPQMHDHQLDLTVKELIEFGRGPHKSWRGRLNKEDEEIVDWALSVTNLEGYEYRLLQSLSGGERQRAWIAMTLAQRTNVLLLDEPTTFLDIVHQLEVMELVKRLNEEFGMTIIMVLHDINQAAQYSDRLLVLKRGKLQYDGVPEEVLCHEMFQHIFGIEVDIFQGSEKPFFTPKRISKKGGAKCEQKNVLPLS.

Residues I2–E238 form the ABC transporter domain. G34–S41 is a binding site for ATP.

It belongs to the ABC transporter superfamily. The complex is composed of two ATP-binding proteins (FpuC), two transmembrane proteins (FpuB) and a solute-binding protein (FpuA).

It localises to the cell membrane. The catalysed reaction is a Fe(III)-siderophore(out) + ATP + H2O = a Fe(III)-siderophore(in) + ADP + phosphate + H(+). Functionally, part of an ABC transporter complex involved in ferric-petrobactin uptake. Probably responsible for energy coupling to the transport system. This Bacillus anthracis protein is Petrobactin import ATP-binding protein FpuC.